The following is a 463-amino-acid chain: Chaperone SurA (463 aa).

The first 25 residues, 1–25 (MTKPFSVVLASLLAITSTISPLASA), serve as a signal peptide directing secretion. PpiC domains follow at residues 174–276 (GSKY…KLME) and 289–388 (VTEY…QRVG). 2 disordered regions span residues 329 to 348 (ATAK…GDLG) and 434 to 463 (GDRA…KPTR). Residues 439-452 (NNATAAPAKSADPA) show a composition bias toward low complexity. The segment covering 453 to 463 (LPAPPPAKPTR) has biased composition (pro residues).

Its subcellular location is the periplasm. It catalyses the reaction [protein]-peptidylproline (omega=180) = [protein]-peptidylproline (omega=0). Its function is as follows. Chaperone involved in the correct folding and assembly of outer membrane proteins. Recognizes specific patterns of aromatic residues and the orientation of their side chains, which are found more frequently in integral outer membrane proteins. May act in both early periplasmic and late outer membrane-associated steps of protein maturation. This Xanthomonas oryzae pv. oryzae (strain KACC10331 / KXO85) protein is Chaperone SurA.